The following is a 684-amino-acid chain: Protein-glutamine gamma-glutamyltransferase 4 (684 aa).

Residues C268, H327, and D350 contribute to the active site. 4 residues coordinate Ca(2+): N390, D392, E442, and E447.

It belongs to the transglutaminase superfamily. Transglutaminase family. In terms of assembly, homodimer. Ca(2+) is required as a cofactor. As to expression, prostate.

The enzyme catalyses L-glutaminyl-[protein] + L-lysyl-[protein] = [protein]-L-lysyl-N(6)-5-L-glutamyl-[protein] + NH4(+). Functionally, associated with the mammalian reproductive process. Catalyzes the cross-linking of proteins and the conjugation of polyamines to specific proteins in the seminal tract. This is Protein-glutamine gamma-glutamyltransferase 4 (TGM4) from Homo sapiens (Human).